We begin with the raw amino-acid sequence, 188 residues long: Biogenesis of lysosome-related organelles complex 1 subunit 5 (188 aa).

Residues 1-24 (MSSSSSSSSPVKSTGSPFIQSLKP) form a disordered region. Residues 10–19 (PVKSTGSPFI) show a composition bias toward polar residues. Residues 101-183 (MQDQLASVLK…QYVTMDKELS (83 aa)) adopt a coiled-coil conformation.

This sequence belongs to the BLOC1S5 family. Component of the biogenesis of lysosome-related organelles complex 1 (BLOC-1).

Its function is as follows. Component of the BLOC-1 complex, a complex that is required for normal biogenesis of lysosome-related organelles (LRO), such as platelet dense granules and melanosomes. Plays a role in intracellular vesicle trafficking. The sequence is that of Biogenesis of lysosome-related organelles complex 1 subunit 5 (bloc1s5) from Xenopus laevis (African clawed frog).